The primary structure comprises 141 residues: Cystatin (141 aa).

The N-terminal stretch at 1-26 (MLHSQLPVAAPLRLLCALLLLPSVTM) is a signal peptide. The Cystatin domain maps to 29-129 (GGLSPRSVTD…CRFQVWSRPW (101 aa)). Positions 73 to 77 (QVVTG) match the Secondary area of contact motif. Intrachain disulfides connect Cys-91/Cys-107 and Cys-120/Cys-140.

It belongs to the cystatin family. Expressed at a low level by the venom gland (at protein level).

It localises to the secreted. Functionally, inhibits various C1 cysteine proteases including cathepsin L, papain and cathepsin B. This protein has no toxic activity and its function in the venom is unknown. It may play a role as a housekeeping or regulatory protein. This chain is Cystatin, found in Hoplocephalus stephensii (Stephens's banded snake).